We begin with the raw amino-acid sequence, 534 residues long: Membrane-bound lytic murein transglycosylase F (534 aa).

The signal sequence occupies residues M1–A24. The non-LT domain stretch occupies residues C25–I285. The interval A287–E534 is LT domain. E330 is an active-site residue. Residues V507–E534 are disordered. Residues N520–E534 show a composition bias toward low complexity.

It in the N-terminal section; belongs to the bacterial solute-binding protein 3 family. In the C-terminal section; belongs to the transglycosylase Slt family.

The protein localises to the cell outer membrane. The catalysed reaction is Exolytic cleavage of the (1-&gt;4)-beta-glycosidic linkage between N-acetylmuramic acid (MurNAc) and N-acetylglucosamine (GlcNAc) residues in peptidoglycan, from either the reducing or the non-reducing ends of the peptidoglycan chains, with concomitant formation of a 1,6-anhydrobond in the MurNAc residue.. In terms of biological role, murein-degrading enzyme that degrades murein glycan strands and insoluble, high-molecular weight murein sacculi, with the concomitant formation of a 1,6-anhydromuramoyl product. Lytic transglycosylases (LTs) play an integral role in the metabolism of the peptidoglycan (PG) sacculus. Their lytic action creates space within the PG sacculus to allow for its expansion as well as for the insertion of various structures such as secretion systems and flagella. This chain is Membrane-bound lytic murein transglycosylase F, found in Vibrio campbellii (strain ATCC BAA-1116).